A 501-amino-acid polypeptide reads, in one-letter code: MAKIDIDQIGALIQKQIEDYKADVRLESIGKVLSVADGIATVYGLSQAILGELVELPHDVKGLVFNLEQFHVGIILFGRTDLIKEGDNVRATKKIFEVPVGEDLLGRVVDPLGNPLDLKGTINADAYYPIERPAKDLMHRGFINEPLHTGIKVIDALVPIGKGQRELIIGDRQTGKSTIAIDTIINQRGKNVICVYVAIGQKDSTIANLVKLLQIKDALDYTVIINAGASKEATLLYIAPYTGSSIAEYFMEQGKDVLIIYDDLSKHAVAYRELSLLMKRPSGREAYPGDIFYLHSRLLERAGKLSKEHGGGSITALPIVETQAGDISAYIPTNIISITDGQLYLEQKLFYQGVRPAINAGLSVSRVGGSAQWKAMKQVAGTLRISLANFRELESFAQFGSDLDPSSKRRLDRGRKTVEILKQDVHELIDMPSQIVTFYALENGFMDDLNLKQIRSLMAEIEQGLSLNETGKKLRKELVEHKAIKDKALMELFIDHVRRFI.

Gly170 to Ser177 contacts ATP.

It belongs to the ATPase alpha/beta chains family. In terms of assembly, F-type ATPases have 2 components, CF(1) - the catalytic core - and CF(0) - the membrane proton channel. CF(1) has five subunits: alpha(3), beta(3), gamma(1), delta(1), epsilon(1). CF(0) has three main subunits: a(1), b(2) and c(9-12). The alpha and beta chains form an alternating ring which encloses part of the gamma chain. CF(1) is attached to CF(0) by a central stalk formed by the gamma and epsilon chains, while a peripheral stalk is formed by the delta and b chains.

It is found in the cell membrane. It catalyses the reaction ATP + H2O + 4 H(+)(in) = ADP + phosphate + 5 H(+)(out). In terms of biological role, produces ATP from ADP in the presence of a proton gradient across the membrane. The alpha chain is a regulatory subunit. This is ATP synthase subunit alpha from Acholeplasma laidlawii (strain PG-8A).